A 122-amino-acid polypeptide reads, in one-letter code: Large ribosomal subunit protein uL14c (122 aa).

The protein belongs to the universal ribosomal protein uL14 family. In terms of assembly, part of the 50S ribosomal subunit.

Its subcellular location is the plastid. It localises to the chloroplast. In terms of biological role, binds to 23S rRNA. The chain is Large ribosomal subunit protein uL14c from Nicotiana tomentosiformis (Tobacco).